Reading from the N-terminus, the 386-residue chain is Trichocyst matrix protein T2-A (386 aa).

The N-terminal stretch at 1-19 is a signal peptide; sequence MKTVILALALIVLASSTQA. A propeptide spanning residues 20–48 is cleaved from the precursor; it reads DVIATIKKIDQSPFGRTLFDTIYLELQTG. Positions 51–154 form a coiled coil; the sequence is LDRLLSTLTD…AEEHEDFEEK (104 aa). A propeptide spanning residues 184 to 238 is cleaved from the precursor; that stretch reads KGKATKQTHKFTKEVASMIQKHFTTSAKKTAKFQHRKGYSKLFKAFATIASKVEQ. Residues 293 to 332 adopt a coiled-coil conformation; the sequence is SALANATSDLASLNDIIAQVEASLDTTEQRIENVSADRHD.

It belongs to the TMP family.

It is found in the trichocyst. In terms of biological role, structural protein that crystallize inside the trichocyst matrix. This is Trichocyst matrix protein T2-A (T2A) from Paramecium tetraurelia.